The primary structure comprises 305 residues: Porphobilinogen deaminase (305 aa).

An S-(dipyrrolylmethanemethyl)cysteine modification is found at Cys240.

It belongs to the HMBS family. In terms of assembly, monomer. Requires dipyrromethane as cofactor.

The catalysed reaction is 4 porphobilinogen + H2O = hydroxymethylbilane + 4 NH4(+). Its pathway is porphyrin-containing compound metabolism; protoporphyrin-IX biosynthesis; coproporphyrinogen-III from 5-aminolevulinate: step 2/4. Tetrapolymerization of the monopyrrole PBG into the hydroxymethylbilane pre-uroporphyrinogen in several discrete steps. This chain is Porphobilinogen deaminase (hemC), found in Xylella fastidiosa (strain 9a5c).